Here is a 139-residue protein sequence, read N- to C-terminus: NAD(P) transhydrogenase subunit alpha part 2 (139 aa).

The next 3 membrane-spanning stretches (helical) occupy residues 49–69 (FWWLMTVFVLACFIGFYVVWS), 78–98 (LMGVTNAISSVIVVGALIATG), and 107–127 (VLGFFAILLASVNIFGGFIVT).

As to quaternary structure, complex of an alpha and a beta chain; in Rhodospirillum, the alpha chain seems to be made of two subunits.

The protein resides in the cell inner membrane. The enzyme catalyses NAD(+) + NADPH + H(+)(in) = NADH + NADP(+) + H(+)(out). The transhydrogenation between NADH and NADP is coupled to respiration and ATP hydrolysis and functions as a proton pump across the membrane. This is NAD(P) transhydrogenase subunit alpha part 2 (pntAB) from Rhodospirillum rubrum (strain ATCC 11170 / ATH 1.1.1 / DSM 467 / LMG 4362 / NCIMB 8255 / S1).